A 209-amino-acid polypeptide reads, in one-letter code: Eukaryotic translation initiation factor 4E (209 aa).

The protein belongs to the eukaryotic initiation factor 4E family. In terms of assembly, eIF4F is a multi-subunit complex, the composition of which varies with external and internal environmental conditions. It is composed of at least eIF4A, eIF4E and eIF4G. eIF4E is also known to interact with other partners.

Recognizes and binds the 7-methylguanosine-containing mRNA cap during an early step in the initiation of protein synthesis and facilitates ribosome binding by inducing the unwinding of the mRNAs secondary structures. This Candida glabrata (strain ATCC 2001 / BCRC 20586 / JCM 3761 / NBRC 0622 / NRRL Y-65 / CBS 138) (Yeast) protein is Eukaryotic translation initiation factor 4E (TIF45).